The chain runs to 425 residues: ATP-dependent RNA helicase RhlB (425 aa).

The Q motif signature appears at 9-37; that stretch reads TRFADLALHPKIQQAISSAGFEYCTPIQA. The region spanning 40–218 is the Helicase ATP-binding domain; sequence LPVALSNRDV…YEHMNAPTKL (179 aa). 53–60 contacts ATP; the sequence is AQTGTGKT. The DEAD box motif lies at 164–167; the sequence is DEAD. Residues 242–389 form the Helicase C-terminal domain; the sequence is KFPLLLTLIE…VTKYDGDALL (148 aa). The segment at 391 to 425 is disordered; it reads DLRRPRPIQRRRRHNSGGGKGKPRGRRSGPPRNAS. Residues 395–419 show a composition bias toward basic residues; the sequence is PRPIQRRRRHNSGGGKGKPRGRRSG.

This sequence belongs to the DEAD box helicase family. RhlB subfamily. In terms of assembly, component of the RNA degradosome, which is a multiprotein complex involved in RNA processing and mRNA degradation.

Its subcellular location is the cytoplasm. The enzyme catalyses ATP + H2O = ADP + phosphate + H(+). In terms of biological role, DEAD-box RNA helicase involved in RNA degradation. Has RNA-dependent ATPase activity and unwinds double-stranded RNA. The sequence is that of ATP-dependent RNA helicase RhlB from Idiomarina loihiensis (strain ATCC BAA-735 / DSM 15497 / L2-TR).